The chain runs to 309 residues: 5-oxoprolinase subunit C (309 aa).

This sequence belongs to the PxpC family. In terms of assembly, forms a complex composed of PxpA, PxpB and PxpC.

The enzyme catalyses 5-oxo-L-proline + ATP + 2 H2O = L-glutamate + ADP + phosphate + H(+). Functionally, catalyzes the cleavage of 5-oxoproline to form L-glutamate coupled to the hydrolysis of ATP to ADP and inorganic phosphate. The sequence is that of 5-oxoprolinase subunit C from Haemophilus influenzae (strain ATCC 51907 / DSM 11121 / KW20 / Rd).